The chain runs to 102 residues: Large ribosomal subunit protein bL21 (102 aa).

It belongs to the bacterial ribosomal protein bL21 family. As to quaternary structure, part of the 50S ribosomal subunit. Contacts protein L20.

Its function is as follows. This protein binds to 23S rRNA in the presence of protein L20. The protein is Large ribosomal subunit protein bL21 of Neisseria meningitidis serogroup A / serotype 4A (strain DSM 15465 / Z2491).